A 179-amino-acid polypeptide reads, in one-letter code: Large ribosomal subunit protein uL6 (179 aa).

Belongs to the universal ribosomal protein uL6 family. As to quaternary structure, part of the 50S ribosomal subunit.

Its function is as follows. This protein binds to the 23S rRNA, and is important in its secondary structure. It is located near the subunit interface in the base of the L7/L12 stalk, and near the tRNA binding site of the peptidyltransferase center. In Mycobacterium tuberculosis (strain ATCC 25618 / H37Rv), this protein is Large ribosomal subunit protein uL6.